Here is a 308-residue protein sequence, read N- to C-terminus: Ribosomal RNA large subunit methyltransferase F (308 aa).

It belongs to the methyltransferase superfamily. METTL16/RlmF family.

The protein resides in the cytoplasm. It catalyses the reaction adenosine(1618) in 23S rRNA + S-adenosyl-L-methionine = N(6)-methyladenosine(1618) in 23S rRNA + S-adenosyl-L-homocysteine + H(+). Its function is as follows. Specifically methylates the adenine in position 1618 of 23S rRNA. The sequence is that of Ribosomal RNA large subunit methyltransferase F from Escherichia coli O6:H1 (strain CFT073 / ATCC 700928 / UPEC).